Here is a 1515-residue protein sequence, read N- to C-terminus: Apolipophorin (1515 aa).

One can recognise a VWFD domain in the interval 952–1118 (LRGVVVNGQH…NSYRLASSCP (167 aa)). Cysteine 976 and cysteine 1117 are joined by a disulfide. N-linked (GlcNAc...) asparagine glycosylation occurs at asparagine 988.

Hemolymph.

Its subcellular location is the secreted. Functionally, mediates transport for various types of lipids in hemolymph. Acts by forming lipoprotein particles that bind lipoproteins and lipids. Binds the A.niger cell wall component alpha-1,3-glucan, a fungal pathogen-associated molecular pattern (PAMP) that activates the host immune response. In Galleria mellonella (Greater wax moth), this protein is Apolipophorin.